Reading from the N-terminus, the 60-residue chain is Large ribosomal subunit protein bL32 (60 aa).

This sequence belongs to the bacterial ribosomal protein bL32 family.

In Clostridium acetobutylicum (strain ATCC 824 / DSM 792 / JCM 1419 / IAM 19013 / LMG 5710 / NBRC 13948 / NRRL B-527 / VKM B-1787 / 2291 / W), this protein is Large ribosomal subunit protein bL32.